The primary structure comprises 233 residues: 7-cyano-7-deazaguanine synthase (233 aa).

ATP is bound at residue 7-17 (LSGGLDSAVTS). Positions 195, 206, 209, and 212 each coordinate Zn(2+).

Belongs to the QueC family. It depends on Zn(2+) as a cofactor.

It catalyses the reaction 7-carboxy-7-deazaguanine + NH4(+) + ATP = 7-cyano-7-deazaguanine + ADP + phosphate + H2O + H(+). Its pathway is purine metabolism; 7-cyano-7-deazaguanine biosynthesis. In terms of biological role, catalyzes the ATP-dependent conversion of 7-carboxy-7-deazaguanine (CDG) to 7-cyano-7-deazaguanine (preQ(0)). This Methanococcus maripaludis (strain DSM 14266 / JCM 13030 / NBRC 101832 / S2 / LL) protein is 7-cyano-7-deazaguanine synthase.